The following is a 334-amino-acid chain: MFKKYSSLENHYNSKFIEKLYSLGLTGGEWVAREKIHGTNFSLIIERDKVTCAKRTGPILPAEDFFGYEIILKNYADSIKAVQDIMETSAVVSYQVFGEFAGPGIQKNVDYCDKDFYVFDIIVTTESGDVTYVDDYMMESFCNTFKFKMAPLLGRGKFEELIKLPNDLDSVVQDYNFTVDHAGLVDANKCVWNAEAKGEVFTAEGYVLKPCYPSWLRNGNRVAIKCKNSKFSEKKKSDKPIKAKVELSEADNKLVGILACYVTLNRVNNVISKIGEIGPKDFGKVMGLTVQDILEETSREGITLTQADNPSLIKKELVKMVQDVLRPAWIELVS.

An adenylyltransferase region spans residues 1 to 234; it reads MFKKYSSLEN…KCKNSKFSEK (234 aa). AMP is bound by residues Glu34, Lys35, Ile36, Asn40, Arg55, and Glu99. Lys35 functions as the N6-AMP-lysine intermediate in the catalytic mechanism. The Mg(2+) site is built by Ile162, Leu164, Asn166, Glu204, and Tyr206. AMP-binding residues include Lys225 and Lys227.

Belongs to the RNA ligase 2 family. Requires Mg(2+) as cofactor. It depends on Mn(2+) as a cofactor.

The catalysed reaction is ATP + (ribonucleotide)n-3'-hydroxyl + 5'-phospho-(ribonucleotide)m = (ribonucleotide)n+m + AMP + diphosphate.. Functionally, repairs 3'-OH/5'-PO4 nicks in duplex RNA or RNA:DNA hybrid in which the broken 3'-OH strand is RNA. The nick ligation reaction entails three nucleotidyl transfer steps. In the first step, the RNA ligase reacts with ATP in the absence of nucleic acid to form a covalent ligase-AMP intermediate and release pyrophosphate. In step 2, the ligase-AMP binds to the nicked duplex nucleic acid and transfers the adenylate to the 5'-PO4 terminus to form an adenylylated nicked intermediate. In step 3, the RNA ligase directs the attack of the nick 3'-OH on the 5'-phosphoanhydride linkage, resulting in a repaired 3' - 5' phosphodiester and release of AMP. The protein is RNA ligase 2 (Y10A) of Enterobacteria phage T4 (Bacteriophage T4).